Reading from the N-terminus, the 110-residue chain is UPF0251 protein PYRAB12660 (110 aa).

The protein belongs to the UPF0251 family.

In Pyrococcus abyssi (strain GE5 / Orsay), this protein is UPF0251 protein PYRAB12660.